A 294-amino-acid chain; its full sequence is Elongation factor Ts (294 aa).

Residues 81-84 (TDFV) are involved in Mg(2+) ion dislocation from EF-Tu.

This sequence belongs to the EF-Ts family.

Its subcellular location is the cytoplasm. Associates with the EF-Tu.GDP complex and induces the exchange of GDP to GTP. It remains bound to the aminoacyl-tRNA.EF-Tu.GTP complex up to the GTP hydrolysis stage on the ribosome. The protein is Elongation factor Ts of Levilactobacillus brevis (strain ATCC 367 / BCRC 12310 / CIP 105137 / JCM 1170 / LMG 11437 / NCIMB 947 / NCTC 947) (Lactobacillus brevis).